Consider the following 146-residue polypeptide: Leghemoglobin 49 (146 aa).

Residues 2–146 enclose the Globin domain; that stretch reads GFTQQQEALV…LATAIKKAMS (145 aa). Nitrated tyrosine occurs at positions 24 and 29. Residue S44 coordinates heme b. S44 bears the Phosphoserine mark. Residue H61 coordinates O2. Heme b is bound by residues H93 and K96. Y134 is modified (nitrated tyrosine).

This sequence belongs to the plant globin family. As to quaternary structure, monomer. Post-translationally, nitrated in effective nodules and particularly in hypoxic conditions; this mechanism may play a protective role in the symbiosis by buffering toxic peroxynitrite NO(2)(-). Nitration level decrease during nodule senescence. In terms of processing, phosphorylation at Ser-44 disrupts the molecular environment of its porphyrin ring oxygen binding pocket, thus leading to a reduced oxygen consumption and to the delivery of oxygen O(2) to symbiosomes. In terms of tissue distribution, accumulates in root nodules after inoculation by bacteria of the genus Rhizobium.

It is found in the cytoplasm. It localises to the cytosol. The protein resides in the nucleus. In terms of biological role, leghemoglobin that reversibly binds oxygen O(2) through a pentacoordinated heme iron. In root nodules, facilitates the diffusion of oxygen to the bacteroids while preventing the bacterial nitrogenase from being inactivated by buffering dioxygen, nitric oxide and carbon monoxide, and promoting the formation of reactive oxygen species (ROS, e.g. H(2)O(2)). This role is essential for symbiotic nitrogen fixation (SNF). The chain is Leghemoglobin 49 from Vicia faba (Broad bean).